The primary structure comprises 341 residues: Phenylalanine--tRNA ligase alpha subunit (341 aa).

E253 is a binding site for Mg(2+).

This sequence belongs to the class-II aminoacyl-tRNA synthetase family. Phe-tRNA synthetase alpha subunit type 1 subfamily. Tetramer of two alpha and two beta subunits. Mg(2+) is required as a cofactor.

It is found in the cytoplasm. It catalyses the reaction tRNA(Phe) + L-phenylalanine + ATP = L-phenylalanyl-tRNA(Phe) + AMP + diphosphate + H(+). The polypeptide is Phenylalanine--tRNA ligase alpha subunit (Methylococcus capsulatus (strain ATCC 33009 / NCIMB 11132 / Bath)).